The following is a 96-amino-acid chain: Co-chaperonin GroES (96 aa).

It belongs to the GroES chaperonin family. Heptamer of 7 subunits arranged in a ring. Interacts with the chaperonin GroEL.

The protein localises to the cytoplasm. Its function is as follows. Together with the chaperonin GroEL, plays an essential role in assisting protein folding. The GroEL-GroES system forms a nano-cage that allows encapsulation of the non-native substrate proteins and provides a physical environment optimized to promote and accelerate protein folding. GroES binds to the apical surface of the GroEL ring, thereby capping the opening of the GroEL channel. The chain is Co-chaperonin GroES from Buchnera aphidicola subsp. Myzus persicae (Myzus persicae primary endosymbiont).